Reading from the N-terminus, the 206-residue chain is Peptidyl-tRNA hydrolase (206 aa).

Residue tyrosine 19 coordinates tRNA. Catalysis depends on histidine 24, which acts as the Proton acceptor. Residues tyrosine 70, asparagine 72, and asparagine 118 each coordinate tRNA.

The protein belongs to the PTH family. As to quaternary structure, monomer.

It localises to the cytoplasm. The enzyme catalyses an N-acyl-L-alpha-aminoacyl-tRNA + H2O = an N-acyl-L-amino acid + a tRNA + H(+). Its function is as follows. Hydrolyzes ribosome-free peptidyl-tRNAs (with 1 or more amino acids incorporated), which drop off the ribosome during protein synthesis, or as a result of ribosome stalling. Catalyzes the release of premature peptidyl moieties from peptidyl-tRNA molecules trapped in stalled 50S ribosomal subunits, and thus maintains levels of free tRNAs and 50S ribosomes. The chain is Peptidyl-tRNA hydrolase from Prochlorococcus marinus (strain MIT 9313).